We begin with the raw amino-acid sequence, 340 residues long: Protein-glutamate methylesterase/protein-glutamine glutaminase 1 (340 aa).

One can recognise a Response regulatory domain in the interval K5 to I122. D56 carries the 4-aspartylphosphate modification. Residues G148 to I340 enclose the CheB-type methylesterase domain. Active-site residues include S160, H187, and D285.

This sequence belongs to the CheB family. In terms of processing, phosphorylated by CheA. Phosphorylation of the N-terminal regulatory domain activates the methylesterase activity.

Its subcellular location is the cytoplasm. The enzyme catalyses [protein]-L-glutamate 5-O-methyl ester + H2O = L-glutamyl-[protein] + methanol + H(+). The catalysed reaction is L-glutaminyl-[protein] + H2O = L-glutamyl-[protein] + NH4(+). Its function is as follows. Involved in chemotaxis. Part of a chemotaxis signal transduction system that modulates chemotaxis in response to various stimuli. Catalyzes the demethylation of specific methylglutamate residues introduced into the chemoreceptors (methyl-accepting chemotaxis proteins or MCP) by CheR. Also mediates the irreversible deamidation of specific glutamine residues to glutamic acid. This chain is Protein-glutamate methylesterase/protein-glutamine glutaminase 1, found in Carboxydothermus hydrogenoformans (strain ATCC BAA-161 / DSM 6008 / Z-2901).